The primary structure comprises 117 residues: MARVKRGFKARRRRNKVLKLAKGYRGARSKLFRSATEAVDRALNYAFRDRRVKKRDFRSLWITRINAASRLNGLSYSKFIFGLKKANVEIDRKVLADIAVSDPKGFSEIAGVARASI.

It belongs to the bacterial ribosomal protein bL20 family.

Functionally, binds directly to 23S ribosomal RNA and is necessary for the in vitro assembly process of the 50S ribosomal subunit. It is not involved in the protein synthesizing functions of that subunit. The chain is Large ribosomal subunit protein bL20 from Pelobacter propionicus (strain DSM 2379 / NBRC 103807 / OttBd1).